Reading from the N-terminus, the 211-residue chain is Protein-L-isoaspartate O-methyltransferase (211 aa).

Residue S62 is part of the active site.

This sequence belongs to the methyltransferase superfamily. L-isoaspartyl/D-aspartyl protein methyltransferase family.

The protein localises to the cytoplasm. The enzyme catalyses [protein]-L-isoaspartate + S-adenosyl-L-methionine = [protein]-L-isoaspartate alpha-methyl ester + S-adenosyl-L-homocysteine. In terms of biological role, catalyzes the methyl esterification of L-isoaspartyl residues in peptides and proteins that result from spontaneous decomposition of normal L-aspartyl and L-asparaginyl residues. It plays a role in the repair and/or degradation of damaged proteins. The chain is Protein-L-isoaspartate O-methyltransferase from Shewanella putrefaciens (strain CN-32 / ATCC BAA-453).